The following is a 206-amino-acid chain: GTP cyclohydrolase 1 (206 aa).

Zn(2+)-binding residues include Cys-95, His-98, and Cys-166.

Belongs to the GTP cyclohydrolase I family. As to quaternary structure, toroid-shaped homodecamer, composed of two pentamers of five dimers.

The catalysed reaction is GTP + H2O = 7,8-dihydroneopterin 3'-triphosphate + formate + H(+). Its pathway is cofactor biosynthesis; 7,8-dihydroneopterin triphosphate biosynthesis; 7,8-dihydroneopterin triphosphate from GTP: step 1/1. The protein is GTP cyclohydrolase 1 of Bartonella henselae (strain ATCC 49882 / DSM 28221 / CCUG 30454 / Houston 1) (Rochalimaea henselae).